The primary structure comprises 334 residues: Fructose-1,6-bisphosphatase class 1 (334 aa).

The Mg(2+) site is built by Glu-89, Asp-112, Leu-114, and Asp-115. Residues 115-118, Asn-208, Tyr-241, and Lys-271 each bind substrate; that span reads DGSS. Glu-277 provides a ligand contact to Mg(2+).

It belongs to the FBPase class 1 family. In terms of assembly, homotetramer. The cofactor is Mg(2+).

The protein localises to the cytoplasm. It catalyses the reaction beta-D-fructose 1,6-bisphosphate + H2O = beta-D-fructose 6-phosphate + phosphate. It participates in carbohydrate biosynthesis; gluconeogenesis. The protein is Fructose-1,6-bisphosphatase class 1 of Photorhabdus laumondii subsp. laumondii (strain DSM 15139 / CIP 105565 / TT01) (Photorhabdus luminescens subsp. laumondii).